Here is a 129-residue protein sequence, read N- to C-terminus: Small ribosomal subunit protein eS6 (129 aa).

The segment at T53–D88 is disordered.

The protein belongs to the eukaryotic ribosomal protein eS6 family.

The protein is Small ribosomal subunit protein eS6 (rps6e) of Haloarcula marismortui (strain ATCC 43049 / DSM 3752 / JCM 8966 / VKM B-1809) (Halobacterium marismortui).